Reading from the N-terminus, the 161-residue chain is Nucleotide-binding protein Sden_0770 (161 aa).

It belongs to the YajQ family.

Its function is as follows. Nucleotide-binding protein. The chain is Nucleotide-binding protein Sden_0770 from Shewanella denitrificans (strain OS217 / ATCC BAA-1090 / DSM 15013).